Here is a 457-residue protein sequence, read N- to C-terminus: Reticulophagy regulator 3 (457 aa).

A disordered region spans residues 1–24 (MAQRVGEEEQGASGLRRRRSGARC). 3 helical membrane passes run 80-100 (FFAL…MIII), 165-185 (PGKF…LGGY), and 186-206 (IPGV…PLAI). A compositionally biased stretch (polar residues) spans 291–305 (ENGTFNLSRGQTPLT). 2 disordered regions span residues 291–351 (ENGT…IPST) and 410–457 (AYAE…HSHQ). The span at 310 to 326 (DLDRHSDPEESFARDLP) shows a compositional bias: basic and acidic residues. A compositionally biased stretch (acidic residues) spans 428–441 (LDTDAEADDFELLD). An LIR motif motif is present at residues 435-440 (DDFELL). A compositionally biased stretch (polar residues) spans 443–457 (SELSQMDPSSSHSHQ).

This sequence belongs to the RETREG family. Interacts with ATG8 family modifier proteins.

Its subcellular location is the endoplasmic reticulum membrane. Functionally, endoplasmic reticulum (ER)-anchored autophagy regulator which exists in an inactive state under basal conditions but is activated following cellular stress. When activated, induces ER fragmentation and mediates ER delivery into lysosomes through sequestration into autophagosomes via interaction with ATG8 family proteins. Promotes ER membrane curvature and ER tubulation required for subsequent ER fragmentation and engulfment into autophagosomes. This is Reticulophagy regulator 3 (retreg3) from Xenopus tropicalis (Western clawed frog).